The following is a 192-amino-acid chain: dCTP deaminase, dUMP-forming (192 aa).

DCTP contacts are provided by residues 101 to 106 (KSSLGR), Asp-119, 127 to 129 (TLE), Gln-148, Tyr-162, and Gln-174. Glu-129 functions as the Proton donor/acceptor in the catalytic mechanism. A disordered region spans residues 165–184 (GAYGNRYQGQRGPTASRSHL). Positions 171-183 (YQGQRGPTASRSH) are enriched in polar residues.

The protein belongs to the dCTP deaminase family. In terms of assembly, homotrimer.

It carries out the reaction dCTP + 2 H2O = dUMP + NH4(+) + diphosphate. It participates in pyrimidine metabolism; dUMP biosynthesis; dUMP from dCTP: step 1/1. Functionally, bifunctional enzyme that catalyzes both the deamination of dCTP to dUTP and the hydrolysis of dUTP to dUMP without releasing the toxic dUTP intermediate. In Kocuria rhizophila (strain ATCC 9341 / DSM 348 / NBRC 103217 / DC2201), this protein is dCTP deaminase, dUMP-forming.